The sequence spans 317 residues: Putative carboxypeptidase RP402 (317 aa).

The active-site Nucleophile is Ser125. Residues Glu225 and His288 each act as charge relay system in the active site.

Belongs to the peptidase S66 family.

The protein is Putative carboxypeptidase RP402 of Rickettsia prowazekii (strain Madrid E).